The chain runs to 23 residues: Basic phospholipase A2 homolog CTs-K49c (23 aa).

Post-translationally, contains 7 disulfide bonds. In terms of tissue distribution, expressed by the venom gland.

It localises to the secreted. Snake venom phospholipase A2 homolog that lacks catalytic activity. Shows myotoxic activities. Induces local edema a few hours after injection (5-10 ug) in the hind paw. This chain is Basic phospholipase A2 homolog CTs-K49c, found in Trimeresurus stejnegeri (Chinese green tree viper).